Consider the following 323-residue polypeptide: Sphingolipid delta(4)-desaturase/C4-monooxygenase DES2 (323 aa).

Residue Gly-2 is the site of N-myristoyl glycine attachment. Helical transmembrane passes span 45-65 (WTVT…QGLA) and 68-88 (WLFF…TLAI). The Histidine box-1 motif lies at 89 to 93 (HDISH). A required for C4-hydroxylase activity region spans residues 95–99 (TAFGT). A Histidine box-2 motif is present at residues 128–132 (HVDHH). A helical transmembrane segment spans residues 209–231 (MVYLLASSLLGLGLHPISGHFVA). Residues 259 to 263 (HMEHH) carry the Histidine box-3 motif.

This sequence belongs to the fatty acid desaturase type 1 family. DEGS subfamily.

It is found in the endoplasmic reticulum membrane. It carries out the reaction a dihydroceramide + 2 Fe(II)-[cytochrome b5] + O2 + 2 H(+) = a phytoceramide + 2 Fe(III)-[cytochrome b5] + H2O. It catalyses the reaction an N-acylsphinganine + 2 Fe(II)-[cytochrome b5] + O2 + 2 H(+) = an N-acylsphing-4-enine + 2 Fe(III)-[cytochrome b5] + 2 H2O. The catalysed reaction is N-octanoylsphinganine + 2 Fe(II)-[cytochrome b5] + O2 + 2 H(+) = N-octanoyl-4-hydroxysphinganine + 2 Fe(III)-[cytochrome b5] + H2O. The enzyme catalyses an N-acylsphinganine + 2 Fe(II)-[cytochrome b5] + O2 + 2 H(+) = an N-acyl-(4R)-4-hydroxysphinganine + 2 Fe(III)-[cytochrome b5] + H2O. Its pathway is membrane lipid metabolism; sphingolipid biosynthesis. Functionally, bifunctional enzyme which acts both as a sphingolipid delta(4)-desaturase and a sphingolipid C4-monooxygenase. This chain is Sphingolipid delta(4)-desaturase/C4-monooxygenase DES2, found in Bos taurus (Bovine).